Consider the following 688-residue polypeptide: NADH-ubiquinone oxidoreductase 75 kDa subunit (688 aa).

The 2Fe-2S ferredoxin-type domain maps to Met1–Glu85. [2Fe-2S] cluster is bound by residues Cys38, Cys49, Cys52, and Cys66. The 4Fe-4S His(Cys)3-ligated-type domain maps to Glu85–Gly124. The [4Fe-4S] cluster site is built by His101, Cys105, Cys108, Cys114, Cys153, Cys156, Cys159, and Cys204. The region spanning Leu223–Glu279 is the 4Fe-4S Mo/W bis-MGD-type domain.

The protein belongs to the complex I 75 kDa subunit family. As to quaternary structure, complex I is composed of about 45 different subunits. The cofactor is [2Fe-2S] cluster. It depends on [4Fe-4S] cluster as a cofactor.

Its subcellular location is the mitochondrion inner membrane. It catalyses the reaction a ubiquinone + NADH + 5 H(+)(in) = a ubiquinol + NAD(+) + 4 H(+)(out). Its function is as follows. Core subunit of the mitochondrial membrane respiratory chain NADH dehydrogenase (Complex I) that is believed to belong to the minimal assembly required for catalysis. Complex I functions in the transfer of electrons from NADH to the respiratory chain. The immediate electron acceptor for the enzyme is believed to be ubiquinone. This is the largest subunit of complex I and it is a component of the iron-sulfur (IP) fragment of the enzyme. It may form part of the active site crevice where NADH is oxidized. The protein is NADH-ubiquinone oxidoreductase 75 kDa subunit (nad11) of Dictyostelium discoideum (Social amoeba).